Consider the following 548-residue polypeptide: Chaperonin GroEL (548 aa).

ATP-binding positions include 30-33 (TLGP), lysine 51, 87-91 (DGTTT), glycine 415, 479-481 (NAA), and aspartate 495.

The protein belongs to the chaperonin (HSP60) family. Forms a cylinder of 14 subunits composed of two heptameric rings stacked back-to-back. Interacts with the co-chaperonin GroES.

It is found in the cytoplasm. It catalyses the reaction ATP + H2O + a folded polypeptide = ADP + phosphate + an unfolded polypeptide.. Functionally, together with its co-chaperonin GroES, plays an essential role in assisting protein folding. The GroEL-GroES system forms a nano-cage that allows encapsulation of the non-native substrate proteins and provides a physical environment optimized to promote and accelerate protein folding. In Ectopseudomonas mendocina (strain ymp) (Pseudomonas mendocina), this protein is Chaperonin GroEL.